We begin with the raw amino-acid sequence, 1306 residues long: Angiotensin-converting enzyme (1306 aa).

Residues 1–29 (MGAASGRRGPGLLLPLPLLLLLPPQPALA) form the signal peptide. Topologically, residues 30-1256 (LDPGLQPGNF…GLDLDAQQAR (1227 aa)) are extracellular. Residues asparagine 38, asparagine 54, asparagine 74, glutamate 103, asparagine 111, isoleucine 121, tyrosine 140, asparagine 146, and asparagine 160 are each glycosylated (N-linked (GlcNAc...) asparagine). Peptidase M2 domains lie at 40–624 (SADE…LGWP) and 643–1222 (VTDE…LGWP). Cysteine 157 and cysteine 165 are oxidised to a cystine. Residue tyrosine 231 participates in chloride binding. Asparagine 318 and asparagine 368 each carry an N-linked (GlcNAc...) asparagine glycan. The cysteines at positions 359 and 377 are disulfide-linked. Histidine 390 serves as a coordination point for Zn(2+). Residue glutamate 391 is the Proton acceptor 1 of the active site. Positions 394, 414, 418, and 442 each coordinate Zn(2+). N-linked (GlcNAc...) asparagine glycosylation is found at asparagine 445 and asparagine 509. Histidine 520 (proton donor 1) is an active-site residue. Arginine 529 is a binding site for chloride. A disulfide bridge links cysteine 545 with cysteine 557. N-linked (GlcNAc...) asparagine glycans are attached at residues asparagine 617 and asparagine 677. N-linked (GlcNAc...) (complex) asparagine glycosylation is found at asparagine 695 and asparagine 714. Cysteine 757 and cysteine 763 form a disulfide bridge. The N-linked (GlcNAc...) asparagine; partial glycan is linked to asparagine 760. Arginine 791 and tyrosine 829 together coordinate chloride. N-linked (GlcNAc...) asparagine; partial glycosylation occurs at asparagine 942. Residues cysteine 957 and cysteine 975 are joined by a disulfide bond. Histidine 988 provides a ligand contact to Zn(2+). Catalysis depends on glutamate 989, which acts as the Proton acceptor 2. Zn(2+) contacts are provided by histidine 992 and glutamate 1016. Residues tryptophan 1090 and arginine 1094 each coordinate chloride. The active-site Proton donor 2 is the histidine 1118. Arginine 1127 provides a ligand contact to chloride. Residues cysteine 1143 and cysteine 1155 are joined by a disulfide bond. The N-linked (GlcNAc...) asparagine; partial glycan is linked to asparagine 1191. Residues 1215 to 1256 (HGEKLGWPQYNWTPNSARSEGPLPDSGRVSFLGLDLDAQQAR) form a juxtamembrane stalk region. The chain crosses the membrane as a helical span at residues 1257–1277 (VGQWLLLFLGIALLVATLGLS). Topologically, residues 1278–1306 (QRLFSIRHRSLHRHSHGPQFGSEVELRHS) are cytoplasmic. Serine 1299 is subject to Phosphoserine.

It belongs to the peptidase M2 family. Monomer and homodimer; homodimerizes following binding to an inhibitor. Interacts with calmodulin (CALM1, CALM2 or CALM3); interaction takes place in the cytoplasmic region and regulates phosphorylation and proteolytic cleavage. The cofactor is Zn(2+). Chloride serves as cofactor. In terms of processing, produced following proteolytic cleavage by secretase enzymes that cleave the transmembrane form in the juxtamembrane stalk region upstream of the transmembrane region. Cleavage can take place at different sites of the juxtamembrane stalk region. Phosphorylated by CK2 on Ser-1299; which allows membrane retention. Phosphorylated on tyrosine residues on its extracellular part, promoting cleavage by secretase enzymes and formation of the soluble form (Angiotensin-converting enzyme, soluble form). In terms of tissue distribution, ubiquitously expressed, with highest levels in lung, kidney, heart, gastrointestinal system and prostate. As to expression, specifically expressed in spermatocytes and adult testis.

Its subcellular location is the cell membrane. The protein localises to the cytoplasm. It is found in the secreted. The catalysed reaction is Release of a C-terminal dipeptide, oligopeptide-|-Xaa-Yaa, when Xaa is not Pro, and Yaa is neither Asp nor Glu. Thus, conversion of angiotensin I to angiotensin II, with increase in vasoconstrictor activity, but no action on angiotensin II.. The enzyme catalyses angiotensin I + H2O = L-histidyl-L-leucine + angiotensin II. It carries out the reaction bradykinin + H2O = L-Phe-L-Arg + bradykinin(1-7). It catalyses the reaction substance P + H2O = substance P(1-9) + L-Leu-L-Met-NH2. The catalysed reaction is substance P + H2O = substance P(1-8) + Gly-L-Leu-L-Met-NH2. The enzyme catalyses substance P + H2O = L-Phe-L-Phe-Gly-L-Leu-L-Met-NH2 + substance P(1-6). It carries out the reaction neurotensin + H2O = neurotensin(1-11) + L-isoleucyl-L-leucine. It catalyses the reaction goralatide + H2O = N-acetyl-L-seryl-L-aspartate + L-lysyl-L-proline. The catalysed reaction is Met-enkephalin + H2O = L-phenylalanyl-L-methionine + L-tyrosylglycylglycine. The enzyme catalyses Leu-enkephalin + H2O = L-tyrosylglycylglycine + L-phenylalanyl-L-leucine. It carries out the reaction Met-enkephalin-Arg-Phe + H2O = L-arginyl-L-phenylalanine + Met-enkephalin. The dipeptidyl carboxypeptidase activity is strongly activated by chloride. The dipeptidyl carboxypeptidase activity is specifically inhibited by lisinopril, captopril and enalaprilat. Its activity is regulated as follows. Strongly inhibited by lisinopril and captopril. Dipeptidyl carboxypeptidase that removes dipeptides from the C-terminus of a variety of circulating hormones, such as angiotensin I, bradykinin or enkephalins, thereby playing a key role in the regulation of blood pressure, electrolyte homeostasis or synaptic plasticity. Composed of two similar catalytic domains, each possessing a functional active site, with different selectivity for substrates. Plays a major role in the angiotensin-renin system that regulates blood pressure and sodium retention by the kidney by converting angiotensin I to angiotensin II, resulting in an increase of the vasoconstrictor activity of angiotensin. Also able to inactivate bradykinin, a potent vasodilator, and therefore enhance the blood pressure response. Acts as a regulator of synaptic transmission by mediating cleavage of neuropeptide hormones, such as substance P, neurotensin or enkephalins. Catalyzes degradation of different enkephalin neuropeptides (Met-enkephalin, Leu-enkephalin, Met-enkephalin-Arg-Phe and possibly Met-enkephalin-Arg-Gly-Leu). Acts as a regulator of synaptic plasticity in the nucleus accumbens of the brain by mediating cleavage of Met-enkephalin-Arg-Phe, a strong ligand of Mu-type opioid receptor OPRM1, into Met-enkephalin. Met-enkephalin-Arg-Phe cleavage by ACE decreases activation of OPRM1, leading to long-term synaptic potentiation of glutamate release. Also acts as a regulator of hematopoietic stem cell differentiation by mediating degradation of hemoregulatory peptide N-acetyl-SDKP (AcSDKP). Acts as a regulator of cannabinoid signaling pathway by mediating degradation of hemopressin, an antagonist peptide of the cannabinoid receptor CNR1. Involved in amyloid-beta metabolism by catalyzing degradation of Amyloid-beta protein 40 and Amyloid-beta protein 42 peptides, thereby preventing plaque formation. Catalyzes cleavage of cholecystokinin (maturation of Cholecystokinin-8 and Cholecystokinin-5) and Gonadoliberin-1 (both maturation and degradation) hormones. Degradation of hemoregulatory peptide N-acetyl-SDKP (AcSDKP) and amyloid-beta proteins is mediated by the N-terminal catalytic domain, while angiotensin I and cholecystokinin cleavage is mediated by the C-terminal catalytic region. Functionally, soluble form that is released in blood plasma and other body fluids following proteolytic cleavage in the juxtamembrane stalk region. In terms of biological role, isoform produced by alternative promoter usage that is specifically expressed in spermatocytes and adult testis, and which is required for male fertility. In contrast to somatic isoforms, only contains one catalytic domain. Acts as a dipeptidyl carboxypeptidase that removes dipeptides from the C-terminus of substrates. The identity of substrates that are needed for male fertility is unknown. May also have a glycosidase activity which releases GPI-anchored proteins from the membrane by cleaving the mannose linkage in the GPI moiety. The GPIase activity was reported to be essential for the egg-binding ability of the sperm. This activity is however unclear and has been challenged by other groups, suggesting that it may be indirect. The sequence is that of Angiotensin-converting enzyme from Homo sapiens (Human).